Consider the following 594-residue polypeptide: DNA ligase 2 (594 aa).

E250 contributes to the ATP binding site. K252 (N6-AMP-lysine intermediate) is an active-site residue. ATP contacts are provided by R257, R273, E303, F343, R419, and K425.

It belongs to the ATP-dependent DNA ligase family. Requires Mg(2+) as cofactor.

The enzyme catalyses ATP + (deoxyribonucleotide)n-3'-hydroxyl + 5'-phospho-(deoxyribonucleotide)m = (deoxyribonucleotide)n+m + AMP + diphosphate.. Its function is as follows. DNA ligase that seals nicks in double-stranded DNA during DNA replication, DNA recombination and DNA repair. This Korarchaeum cryptofilum (strain OPF8) protein is DNA ligase 2.